We begin with the raw amino-acid sequence, 416 residues long: Trifolitoxin-processing protein TfxD (416 aa).

11 helical membrane-spanning segments follow: residues 24 to 44 (MIPNVADTIVVTLIGATALQV), 48 to 68 (VLITILTLNIAFLNFCSLICM), 79 to 99 (VFAAIVRAACMMIGVYLALIA), 114 to 134 (IAFIALSALRPFVAGWNAYCA), 153 to 173 (SSLIYAGVNLLFVGLSHFAGT), 176 to 196 (SIISLLIGVYLALFHNALAYA), 230 to 250 (ASFINMLEMGFLALVGWVVAA), 255 to 275 (IAVFYFPFFTLVELTSGLAIG), 295 to 315 (VLIAVYSTYSLLCFLIYVGLI), 322 to 342 (IFALPLSLAGLALLFLICDGL), and 372 to 392 (VILALAAVLGSVQALAIALVL).

It localises to the cell membrane. The actions of the proteins TfxB, TfxD and TfxF are implicated in the processing of the inactive trifolitoxin (TfxA) precursor into the active peptide. This Rhizobium leguminosarum bv. trifolii protein is Trifolitoxin-processing protein TfxD (tfxD).